The sequence spans 431 residues: Glutamyl-tRNA(Gln) amidotransferase subunit A (431 aa).

Active-site charge relay system residues include lysine 55 and serine 130. Serine 154 functions as the Acyl-ester intermediate in the catalytic mechanism.

Belongs to the amidase family. GatA subfamily. In terms of assembly, heterotrimer of A, B and C subunits.

It carries out the reaction L-glutamyl-tRNA(Gln) + L-glutamine + ATP + H2O = L-glutaminyl-tRNA(Gln) + L-glutamate + ADP + phosphate + H(+). Functionally, allows the formation of correctly charged Gln-tRNA(Gln) through the transamidation of misacylated Glu-tRNA(Gln) in organisms which lack glutaminyl-tRNA synthetase. The reaction takes place in the presence of glutamine and ATP through an activated gamma-phospho-Glu-tRNA(Gln). This chain is Glutamyl-tRNA(Gln) amidotransferase subunit A, found in Methanococcus maripaludis (strain C5 / ATCC BAA-1333).